We begin with the raw amino-acid sequence, 257 residues long: UPF0246 protein CPS_4102 (257 aa).

Belongs to the UPF0246 family.

The protein is UPF0246 protein CPS_4102 of Colwellia psychrerythraea (strain 34H / ATCC BAA-681) (Vibrio psychroerythus).